The chain runs to 493 residues: Ribosomal protein uS12 methylthiotransferase RimO (493 aa).

In terms of domain architecture, MTTase N-terminal spans 5-121 (RTVALVTLGC…ISDRLQTILN (117 aa)). Positions 14, 50, and 84 each coordinate [4Fe-4S] cluster. Positions 153–177 (LPGHGPTDLPEGVAPASGPRAPLRR) are disordered. Residues 179–410 (LDGSPVASVK…RLAEELVSQR (232 aa)) enclose the Radical SAM core domain. Residues Cys-193, Cys-197, and Cys-200 each contribute to the [4Fe-4S] cluster site. The TRAM domain occupies 412–482 (DERVGATVRV…GVDLVAEPLL (71 aa)).

It belongs to the methylthiotransferase family. RimO subfamily. [4Fe-4S] cluster is required as a cofactor.

The protein resides in the cytoplasm. The enzyme catalyses L-aspartate(89)-[ribosomal protein uS12]-hydrogen + (sulfur carrier)-SH + AH2 + 2 S-adenosyl-L-methionine = 3-methylsulfanyl-L-aspartate(89)-[ribosomal protein uS12]-hydrogen + (sulfur carrier)-H + 5'-deoxyadenosine + L-methionine + A + S-adenosyl-L-homocysteine + 2 H(+). In terms of biological role, catalyzes the methylthiolation of an aspartic acid residue of ribosomal protein uS12. This chain is Ribosomal protein uS12 methylthiotransferase RimO, found in Streptomyces coelicolor (strain ATCC BAA-471 / A3(2) / M145).